The following is a 336-amino-acid chain: UPF0065 protein in tcbD-tcbE intergenic region (336 aa).

A signal peptide spans 1-32; it reads MHSSKCPDLANIGRRRVLAGIALAMTTSSTRA.

It belongs to the UPF0065 (bug) family.

It localises to the periplasm. The sequence is that of UPF0065 protein in tcbD-tcbE intergenic region from Pseudomonas sp. (strain P51).